We begin with the raw amino-acid sequence, 122 residues long: Thioredoxin H-type (122 aa).

The Thioredoxin domain occupies 2–118 (AAEEGVVIAC…IVKHVGATAA (117 aa)). The cysteines at positions 40 and 43 are disulfide-linked.

The protein resides in the cytoplasm. Participates in various redox reactions through the reversible oxidation of the active center dithiol to a disulfide. The H form is known to activate a number of cytosolic enzymes. The protein is Thioredoxin H-type (TRXH) of Oryza sativa subsp. indica (Rice).